The sequence spans 64 residues: DNA gyrase inhibitor YacG (64 aa).

The Zn(2+) site is built by Cys-9, Cys-12, Cys-28, and Cys-32. The interval 45–64 is disordered; it reads NAIAGAPDMSDSDGWSEDQY. Residues 54–64 show a composition bias toward acidic residues; it reads SDSDGWSEDQY.

It belongs to the DNA gyrase inhibitor YacG family. As to quaternary structure, interacts with GyrB. Requires Zn(2+) as cofactor.

Inhibits all the catalytic activities of DNA gyrase by preventing its interaction with DNA. Acts by binding directly to the C-terminal domain of GyrB, which probably disrupts DNA binding by the gyrase. The chain is DNA gyrase inhibitor YacG from Vibrio parahaemolyticus serotype O3:K6 (strain RIMD 2210633).